Here is a 154-residue protein sequence, read N- to C-terminus: Ribosome maturation factor RimP (154 aa).

Belongs to the RimP family.

It localises to the cytoplasm. Required for maturation of 30S ribosomal subunits. This is Ribosome maturation factor RimP from Heliobacterium modesticaldum (strain ATCC 51547 / Ice1).